The following is a 209-amino-acid chain: Imidazole glycerol phosphate synthase subunit HisH (209 aa).

Residues 1–205 (MIAIIDYGMG…KGVVKQWKSS (205 aa)) form the Glutamine amidotransferase type-1 domain. The Nucleophile role is filled by C79. Active-site residues include H180 and E182.

In terms of assembly, heterodimer of HisH and HisF.

Its subcellular location is the cytoplasm. It carries out the reaction 5-[(5-phospho-1-deoxy-D-ribulos-1-ylimino)methylamino]-1-(5-phospho-beta-D-ribosyl)imidazole-4-carboxamide + L-glutamine = D-erythro-1-(imidazol-4-yl)glycerol 3-phosphate + 5-amino-1-(5-phospho-beta-D-ribosyl)imidazole-4-carboxamide + L-glutamate + H(+). The enzyme catalyses L-glutamine + H2O = L-glutamate + NH4(+). The protein operates within amino-acid biosynthesis; L-histidine biosynthesis; L-histidine from 5-phospho-alpha-D-ribose 1-diphosphate: step 5/9. Its function is as follows. IGPS catalyzes the conversion of PRFAR and glutamine to IGP, AICAR and glutamate. The HisH subunit catalyzes the hydrolysis of glutamine to glutamate and ammonia as part of the synthesis of IGP and AICAR. The resulting ammonia molecule is channeled to the active site of HisF. This is Imidazole glycerol phosphate synthase subunit HisH from Bacillus cytotoxicus (strain DSM 22905 / CIP 110041 / 391-98 / NVH 391-98).